Consider the following 65-residue polypeptide: Large ribosomal subunit protein bL35 (65 aa).

The tract at residues 24 to 48 (RRKAGKSHLLEHKSSDKKRSMSKTT) is disordered. Residues 31–42 (HLLEHKSSDKKR) show a composition bias toward basic and acidic residues.

The protein belongs to the bacterial ribosomal protein bL35 family.

This chain is Large ribosomal subunit protein bL35, found in Nostoc punctiforme (strain ATCC 29133 / PCC 73102).